We begin with the raw amino-acid sequence, 229 residues long: Auxin-responsive protein IAA17 (229 aa).

The short motif at 14–18 (LCLGL) is the EAR-like (transcriptional repression) element. Residues 110–211 (AAFVKVSMDG…TCKRLRLMKG (102 aa)) enclose the PB1 domain.

Belongs to the Aux/IAA family. As to quaternary structure, homodimers and heterodimers. Interacts with the auxin response factors ARF1 and IAA24. Interacts with IAA1. Interacts with TPL. Interacts (via PB1 domain) with ARF7 (via PB1 domain). Phosphorylated by phytochrome A in vitro.

It is found in the nucleus. Its function is as follows. Aux/IAA proteins are short-lived transcriptional factors that function as repressors of early auxin response genes at low auxin concentrations. Repression is thought to result from the interaction with auxin response factors (ARFs), proteins that bind to the auxin-responsive promoter element (AuxRE). Formation of heterodimers with ARF proteins may alter their ability to modulate early auxin response genes expression. The chain is Auxin-responsive protein IAA17 (IAA17) from Arabidopsis thaliana (Mouse-ear cress).